Reading from the N-terminus, the 409-residue chain is Tryptophan synthase beta chain (409 aa).

An N6-(pyridoxal phosphate)lysine modification is found at lysine 95.

Belongs to the TrpB family. In terms of assembly, tetramer of two alpha and two beta chains. Requires pyridoxal 5'-phosphate as cofactor.

It catalyses the reaction (1S,2R)-1-C-(indol-3-yl)glycerol 3-phosphate + L-serine = D-glyceraldehyde 3-phosphate + L-tryptophan + H2O. Its pathway is amino-acid biosynthesis; L-tryptophan biosynthesis; L-tryptophan from chorismate: step 5/5. Functionally, the beta subunit is responsible for the synthesis of L-tryptophan from indole and L-serine. The chain is Tryptophan synthase beta chain from Pseudomonas savastanoi pv. phaseolicola (Pseudomonas syringae pv. phaseolicola).